The sequence spans 309 residues: Homoserine kinase (309 aa).

Residue P91–C101 coordinates ATP.

The protein belongs to the GHMP kinase family. Homoserine kinase subfamily.

It localises to the cytoplasm. It catalyses the reaction L-homoserine + ATP = O-phospho-L-homoserine + ADP + H(+). The protein operates within amino-acid biosynthesis; L-threonine biosynthesis; L-threonine from L-aspartate: step 4/5. Its function is as follows. Catalyzes the ATP-dependent phosphorylation of L-homoserine to L-homoserine phosphate. The protein is Homoserine kinase of Cronobacter sakazakii (strain ATCC BAA-894) (Enterobacter sakazakii).